The primary structure comprises 631 residues: Clathrin interactor 1 (631 aa).

The ENTH domain maps to 24-157 (NVVMNYSEIE…QDDDRLREER (134 aa)). An a 1,2-diacyl-sn-glycero-3-phospho-(1D-myo-inositol-4,5-bisphosphate)-binding site is contributed by R37. The tract at residues 60–62 (FMY) is interaction with VTI1B. Residue R75 coordinates a 1,2-diacyl-sn-glycero-3-phospho-(1D-myo-inositol-4,5-bisphosphate). Interaction with VTI1B stretches follow at residues 102–104 (SER) and 150–161 (DDRLREERKKAK). Phosphoserine is present on residues S171, S174, S213, S218, S235, S253, and S307. A disordered region spans residues 227–339 (FRRKDREDSP…SSGDLVDLFD (113 aa)). Over residues 230–247 (KDREDSPERCSDSDEEKK) the composition is skewed to basic and acidic residues. Positions 308 to 318 (PDQNASTHTPQ) are enriched in polar residues. Phosphothreonine is present on T316. Residues 319-331 (SSAKPSVPSSKSS) show a composition bias toward low complexity. Residues S320 and S630 each carry the phosphoserine modification.

It belongs to the epsin family. As to quaternary structure, binds clathrin heavy chain and AP-2. Interacts with VTI1B. Interacts with GGA2 (via GAE domain). Interacts with AP1G1 (via GAE domain). Interacts with AP1G2 (via GAE domain).

The protein localises to the cytoplasm. It is found in the perinuclear region. It localises to the membrane. The protein resides in the cytoplasmic vesicle. Its subcellular location is the clathrin-coated vesicle. Functionally, binds to membranes enriched in phosphatidylinositol 4,5-bisphosphate (PtdIns(4,5)P2). May have a role in transport via clathrin-coated vesicles from the trans-Golgi network to endosomes. Stimulates clathrin assembly. The polypeptide is Clathrin interactor 1 (Clint1) (Mus musculus (Mouse)).